A 306-amino-acid chain; its full sequence is Serine/threonine-protein kinase KIN28 (306 aa).

The Protein kinase domain occupies 7–290 (YTKEKKVGEG…AVQCLESDYF (284 aa)). Residues 13–21 (VGEGTYAVV) and K36 contribute to the ATP site. D129 serves as the catalytic Proton acceptor. The residue at position 162 (T162) is a Phosphothreonine; by CAK.

Belongs to the protein kinase superfamily. CMGC Ser/Thr protein kinase family. CDC2/CDKX subfamily. CCL1 and KIN28 form the TFIIK complex, a component of the TFIIH holo complex. Component of a complex consisting of KIN28, CCL1 and TFB3. Interacts with TFB3. Also interacts with HNT1 and HOG1. In terms of processing, phosphorylation of Thr-162 regulates the affinity of interaction between CCL1, KIN28 and TFB3. Thr-162 phosphorylation does not vary through the cell cycle and is necessary for full kinase activity.

The protein resides in the nucleus. It carries out the reaction [DNA-directed RNA polymerase] + ATP = phospho-[DNA-directed RNA polymerase] + ADP + H(+). Catalytic component of the TFIIK complex (KIN28-CCL1 dimer) which is the protein kinase component of transcription factor IIH (TFIIH) and phosphorylates the C-terminal domain of RNA polymerase II during transition from transcription to elongation after preinitiation complex (PIC) formation, thereby positively regulating transcription. TFIIH (or factor B) is essential for both basal and activated transcription, and is involved in nucleotide excision repair (NER) of damaged DNA. TFIIH has DNA-dependent ATPase activity and is essential for polymerase II transcription in vitro. Essential for cell proliferation. The chain is Serine/threonine-protein kinase KIN28 (KIN28) from Saccharomyces cerevisiae (strain ATCC 204508 / S288c) (Baker's yeast).